Consider the following 449-residue polypeptide: Type 3 secretion system ATPase (449 aa).

178 to 183 (GCGKTT) contacts ATP.

It belongs to the ATPase alpha/beta chains family. T3SS ATPase subfamily. In terms of assembly, the core secretion machinery of the T3SS is composed of approximately 20 different proteins, including cytoplasmic components, a base, an export apparatus and a needle. This subunit is part of the cytosolic complex. Forms homododecamers. Comprises two hexameric rings that are probably stacked face-to-face by the association of their C-terminal domains. Also present as monomer and homohexamer in solution.

It localises to the cytoplasm. The enzyme catalyses ATP + H2O + cellular proteinSide 1 = ADP + phosphate + cellular proteinSide 2.. With respect to regulation, oligomerization increases ATPase activity. ATPase component of the type III secretion system (T3SS), also called injectisome, which is used to inject bacterial effector proteins into eukaryotic host cells. Acts as a molecular motor to provide the energy that is required for the export of proteins. Required for type III secretion apparatus (T3SA) formation, proper protein secretion, host cell invasion and virulence. May play a critical role in T3SS substrate recognition, disassembly of the effector/chaperone complex and unfolding of the effector in an ATP-dependent manner prior to secretion. In Pseudomonas savastanoi pv. phaseolicola (Pseudomonas syringae pv. phaseolicola), this protein is Type 3 secretion system ATPase.